Consider the following 311-residue polypeptide: Glycine--tRNA ligase alpha subunit (311 aa).

Belongs to the class-II aminoacyl-tRNA synthetase family. Tetramer of two alpha and two beta subunits.

It is found in the cytoplasm. The catalysed reaction is tRNA(Gly) + glycine + ATP = glycyl-tRNA(Gly) + AMP + diphosphate. The sequence is that of Glycine--tRNA ligase alpha subunit from Brucella anthropi (strain ATCC 49188 / DSM 6882 / CCUG 24695 / JCM 21032 / LMG 3331 / NBRC 15819 / NCTC 12168 / Alc 37) (Ochrobactrum anthropi).